The sequence spans 138 residues: Ribosome-binding factor A (138 aa).

Residues 116-138 (VAQDSQHQEGPASPDAKPESTEE) are disordered.

This sequence belongs to the RbfA family. Monomer. Binds 30S ribosomal subunits, but not 50S ribosomal subunits or 70S ribosomes.

It is found in the cytoplasm. Its function is as follows. One of several proteins that assist in the late maturation steps of the functional core of the 30S ribosomal subunit. Associates with free 30S ribosomal subunits (but not with 30S subunits that are part of 70S ribosomes or polysomes). Required for efficient processing of 16S rRNA. May interact with the 5'-terminal helix region of 16S rRNA. This chain is Ribosome-binding factor A, found in Pseudomonas syringae pv. tomato (strain ATCC BAA-871 / DC3000).